Here is a 121-residue protein sequence, read N- to C-terminus: Large ribosomal subunit protein bL20 (121 aa).

It belongs to the bacterial ribosomal protein bL20 family.

Its function is as follows. Binds directly to 23S ribosomal RNA and is necessary for the in vitro assembly process of the 50S ribosomal subunit. It is not involved in the protein synthesizing functions of that subunit. This is Large ribosomal subunit protein bL20 from Ruegeria sp. (strain TM1040) (Silicibacter sp.).